The chain runs to 626 residues: Polyphenol oxidase C, chloroplastic (626 aa).

The transit peptide at 1 to 83 (MASLCSNSST…ANAIPLAASA (83 aa)) directs the protein to the chloroplast. 2 disulfide bridges follow: cysteine 94-cysteine 110 and cysteine 109-cysteine 177. Residues histidine 176, histidine 194, histidine 203, histidine 324, histidine 328, and histidine 366 each contribute to the Cu cation site. The segment at residues 180–194 (CNGGYSIDGKVLQVH) is a cross-link (2'-(S-cysteinyl)-histidine (Cys-His)).

The protein belongs to the tyrosinase family. It depends on Cu(2+) as a cofactor.

Its subcellular location is the plastid. The protein resides in the chloroplast thylakoid lumen. It catalyses the reaction 2 catechol + O2 = 2 1,2-benzoquinone + 2 H2O. Functionally, catalyzes the oxidation of mono- and o-diphenols to o-diquinones. This Solanum lycopersicum (Tomato) protein is Polyphenol oxidase C, chloroplastic.